Here is a 155-residue protein sequence, read N- to C-terminus: Ubiquinone biosynthesis protein COQ4 homolog, mitochondrial (155 aa).

Belongs to the COQ4 family. Component of a multi-subunit COQ enzyme complex. It depends on Zn(2+) as a cofactor.

The protein localises to the mitochondrion inner membrane. The catalysed reaction is a 4-hydroxy-3-methoxy-5-(all-trans-polyprenyl)benzoate + H(+) = a 2-methoxy-6-(all-trans-polyprenyl)phenol + CO2. It functions in the pathway cofactor biosynthesis; ubiquinone biosynthesis. Its function is as follows. Lyase that catalyzes the C1-decarboxylation of 4-hydroxy-3-methoxy-5-(all-trans-polyprenyl)benzoic acid into 2-methoxy-6-(all-trans-polyprenyl)phenol during ubiquinone biosynthesis. The sequence is that of Ubiquinone biosynthesis protein COQ4 homolog, mitochondrial from Cryptosporidium hominis.